We begin with the raw amino-acid sequence, 83 residues long: Small ribosomal subunit protein bS20 (83 aa).

This sequence belongs to the bacterial ribosomal protein bS20 family.

Binds directly to 16S ribosomal RNA. This is Small ribosomal subunit protein bS20 from Staphylococcus haemolyticus (strain JCSC1435).